The following is a 210-amino-acid chain: Thymidylate kinase (210 aa).

10–17 (GLEGAGKS) contributes to the ATP binding site.

It belongs to the thymidylate kinase family.

It carries out the reaction dTMP + ATP = dTDP + ADP. Its function is as follows. Phosphorylation of dTMP to form dTDP in both de novo and salvage pathways of dTTP synthesis. In Haemophilus influenzae (strain ATCC 51907 / DSM 11121 / KW20 / Rd), this protein is Thymidylate kinase (tmk).